The chain runs to 288 residues: 33 kDa chaperonin (288 aa).

2 cysteine pairs are disulfide-bonded: Cys-237–Cys-239 and Cys-270–Cys-273.

It belongs to the HSP33 family. In terms of processing, under oxidizing conditions two disulfide bonds are formed involving the reactive cysteines. Under reducing conditions zinc is bound to the reactive cysteines and the protein is inactive.

It is found in the cytoplasm. Redox regulated molecular chaperone. Protects both thermally unfolding and oxidatively damaged proteins from irreversible aggregation. Plays an important role in the bacterial defense system toward oxidative stress. The sequence is that of 33 kDa chaperonin from Agathobacter rectalis (strain ATCC 33656 / DSM 3377 / JCM 17463 / KCTC 5835 / VPI 0990) (Eubacterium rectale).